A 271-amino-acid polypeptide reads, in one-letter code: Acyl-[acyl-carrier-protein]--UDP-N-acetylglucosamine O-acyltransferase (271 aa).

This sequence belongs to the transferase hexapeptide repeat family. LpxA subfamily. As to quaternary structure, homotrimer.

It localises to the cytoplasm. The catalysed reaction is a (3R)-hydroxyacyl-[ACP] + UDP-N-acetyl-alpha-D-glucosamine = a UDP-3-O-[(3R)-3-hydroxyacyl]-N-acetyl-alpha-D-glucosamine + holo-[ACP]. Its pathway is glycolipid biosynthesis; lipid IV(A) biosynthesis; lipid IV(A) from (3R)-3-hydroxytetradecanoyl-[acyl-carrier-protein] and UDP-N-acetyl-alpha-D-glucosamine: step 1/6. In terms of biological role, involved in the biosynthesis of lipid A, a phosphorylated glycolipid that anchors the lipopolysaccharide to the outer membrane of the cell. The chain is Acyl-[acyl-carrier-protein]--UDP-N-acetylglucosamine O-acyltransferase from Azorhizobium caulinodans (strain ATCC 43989 / DSM 5975 / JCM 20966 / LMG 6465 / NBRC 14845 / NCIMB 13405 / ORS 571).